The sequence spans 221 residues: Uracil-DNA glycosylase (221 aa).

The active-site Proton acceptor is the Asp65.

It belongs to the uracil-DNA glycosylase (UDG) superfamily. UNG family.

Its subcellular location is the cytoplasm. The enzyme catalyses Hydrolyzes single-stranded DNA or mismatched double-stranded DNA and polynucleotides, releasing free uracil.. In terms of biological role, excises uracil residues from the DNA which can arise as a result of misincorporation of dUMP residues by DNA polymerase or due to deamination of cytosine. This is Uracil-DNA glycosylase from Christiangramia forsetii (strain DSM 17595 / CGMCC 1.15422 / KT0803) (Gramella forsetii).